The following is a 435-amino-acid chain: ATP-dependent protease ATPase subunit HslU (435 aa).

ATP contacts are provided by residues Ile18, 60–65, Asp248, Glu313, and Arg385; that span reads GVGKTE.

Belongs to the ClpX chaperone family. HslU subfamily. As to quaternary structure, a double ring-shaped homohexamer of HslV is capped on each side by a ring-shaped HslU homohexamer. The assembly of the HslU/HslV complex is dependent on binding of ATP.

The protein localises to the cytoplasm. In terms of biological role, ATPase subunit of a proteasome-like degradation complex; this subunit has chaperone activity. The binding of ATP and its subsequent hydrolysis by HslU are essential for unfolding of protein substrates subsequently hydrolyzed by HslV. HslU recognizes the N-terminal part of its protein substrates and unfolds these before they are guided to HslV for hydrolysis. This chain is ATP-dependent protease ATPase subunit HslU, found in Allorhizobium ampelinum (strain ATCC BAA-846 / DSM 112012 / S4) (Agrobacterium vitis (strain S4)).